We begin with the raw amino-acid sequence, 143 residues long: 3-dehydroquinate dehydratase (143 aa).

The active-site Proton acceptor is the tyrosine 22. Substrate contacts are provided by asparagine 73, histidine 79, and aspartate 86. Histidine 99 acts as the Proton donor in catalysis. Residues 100 to 101 (IS) and arginine 110 each bind substrate.

It belongs to the type-II 3-dehydroquinase family. In terms of assembly, homododecamer.

The enzyme catalyses 3-dehydroquinate = 3-dehydroshikimate + H2O. Its pathway is metabolic intermediate biosynthesis; chorismate biosynthesis; chorismate from D-erythrose 4-phosphate and phosphoenolpyruvate: step 3/7. In terms of biological role, catalyzes a trans-dehydration via an enolate intermediate. The polypeptide is 3-dehydroquinate dehydratase (Mycolicibacterium paratuberculosis (strain ATCC BAA-968 / K-10) (Mycobacterium paratuberculosis)).